A 411-amino-acid chain; its full sequence is 4-coumarate--CoA ligase (411 aa).

This sequence belongs to the ATP-dependent AMP-binding enzyme family.

It carries out the reaction (E)-4-coumarate + ATP + CoA = (E)-4-coumaroyl-CoA + AMP + diphosphate. In terms of biological role, converts p-coumaric acid into p-coumaryl CoA. This is necessary for the activation of the photoactive yellow protein (PYP) chromophore. In Cereibacter sphaeroides (strain ATCC 17023 / DSM 158 / JCM 6121 / CCUG 31486 / LMG 2827 / NBRC 12203 / NCIMB 8253 / ATH 2.4.1.) (Rhodobacter sphaeroides), this protein is 4-coumarate--CoA ligase (pcl).